The primary structure comprises 394 residues: GDNF family receptor alpha-like (394 aa).

Positions 1–19 (MLVFIFLAVRLSSENESSS) are cleaved as a signal peptide. Residues 20–350 (QTNDCAYFMR…LTGFNSPFSG (331 aa)) lie on the Extracellular side of the membrane. Residues Asn-65, Asn-101, and Asn-115 are each glycosylated (N-linked (GlcNAc...) asparagine). 11 disulfide bridges follow: Cys-132-Cys-190, Cys-139-Cys-145, Cys-156-Cys-168, Cys-163-Cys-211, Cys-192-Cys-199, Cys-221-Cys-292, Cys-228-Cys-234, Cys-245-Cys-276, Cys-253-Cys-259, Cys-270-Cys-317, and Cys-294-Cys-305. The segment at 150–229 (ALYLKACTAN…TCLSVIHTCR (80 aa)) is required for interaction with GDF15. A helical membrane pass occupies residues 351–371 (ELIYVVVCMVVTSGILSLVML). The Cytoplasmic segment spans residues 372–394 (KLRIPSKKRDPAPIEIAGAVIIQ).

This sequence belongs to the GDNFR family. In terms of assembly, interacts (via the extracellular domain) with GDF15 and RET; receptor of GDF15, mediates cellular signaling through interaction with RET after GDF15-binding. Interaction with RET requires previous GDF15-binding. Cleaved and inactivated by MMP14, inhibiting the GDF15-GFRAL aversive response. Expressed in the brainstem, restricted to cells in the area postrema and the immediately adjacent region of the nucleus tractus solitarius. Detected at low levels in testis.

The protein localises to the cell membrane. Brainstem-restricted receptor for GDF15 hormone, which triggers an aversive response, characterized by nausea, vomiting, and/or loss of appetite in response to various stresses. The aversive response is both required to reduce continuing exposure to those stresses at the time of exposure and to promote avoidance behavior in the future. The GDF15-GFRAL aversive response is triggered by stresses, such as anticancer drugs (camptothecin or cisplatin), cancers or drugs such as metformin. Upon interaction with its ligand, GDF15, mediates the GDF15-induced autophosphorylation and activation of the RET tyrosine kinase receptor, leading to activation of MAPK- and AKT- signaling pathways. Ligand-binding activates GFRAL-expressing neurons localized in the area postrema and nucleus tractus solitarius of the brainstem. The GDF15-GFRAL signal induces expression of genes involved in metabolism, such as lipid metabolism in adipose tissues. The chain is GDNF family receptor alpha-like from Rattus norvegicus (Rat).